The primary structure comprises 446 residues: Tubulin beta-1 chain (446 aa).

GTP-binding residues include glutamine 11, glutamate 69, serine 138, glycine 142, threonine 143, glycine 144, asparagine 204, and asparagine 226. Glutamate 69 is a Mg(2+) binding site. A disordered region spans residues 422–446; it reads YQQYQDATADEEGEYEDEEEGDLQD. Over residues 429-446 the composition is skewed to acidic residues; the sequence is TADEEGEYEDEEEGDLQD.

This sequence belongs to the tubulin family. In terms of assembly, dimer of alpha and beta chains. A typical microtubule is a hollow water-filled tube with an outer diameter of 25 nm and an inner diameter of 15 nM. Alpha-beta heterodimers associate head-to-tail to form protofilaments running lengthwise along the microtubule wall with the beta-tubulin subunit facing the microtubule plus end conferring a structural polarity. Microtubules usually have 13 protofilaments but different protofilament numbers can be found in some organisms and specialized cells. Mg(2+) is required as a cofactor. In terms of tissue distribution, found in areas of rapidly dividing tissues.

The protein localises to the cytoplasm. The protein resides in the cytoskeleton. Functionally, tubulin is the major constituent of microtubules, a cylinder consisting of laterally associated linear protofilaments composed of alpha- and beta-tubulin heterodimers. Microtubules grow by the addition of GTP-tubulin dimers to the microtubule end, where a stabilizing cap forms. Below the cap, tubulin dimers are in GDP-bound state, owing to GTPase activity of alpha-tubulin. In Zea mays (Maize), this protein is Tubulin beta-1 chain (TUBB1).